Consider the following 264-residue polypeptide: Thymidylate synthase (264 aa).

A dUMP-binding site is contributed by R21. H51 serves as a coordination point for (6R)-5,10-methylene-5,6,7,8-tetrahydrofolate. 126 to 127 (RR) lines the dUMP pocket. The active-site Nucleophile is C146. DUMP contacts are provided by residues 166 to 169 (RSCD), N177, and 207 to 209 (HLY). Residue D169 coordinates (6R)-5,10-methylene-5,6,7,8-tetrahydrofolate. A263 lines the (6R)-5,10-methylene-5,6,7,8-tetrahydrofolate pocket.

This sequence belongs to the thymidylate synthase family. Bacterial-type ThyA subfamily. As to quaternary structure, homodimer.

It localises to the cytoplasm. The enzyme catalyses dUMP + (6R)-5,10-methylene-5,6,7,8-tetrahydrofolate = 7,8-dihydrofolate + dTMP. Its pathway is pyrimidine metabolism; dTTP biosynthesis. Functionally, catalyzes the reductive methylation of 2'-deoxyuridine-5'-monophosphate (dUMP) to 2'-deoxythymidine-5'-monophosphate (dTMP) while utilizing 5,10-methylenetetrahydrofolate (mTHF) as the methyl donor and reductant in the reaction, yielding dihydrofolate (DHF) as a by-product. This enzymatic reaction provides an intracellular de novo source of dTMP, an essential precursor for DNA biosynthesis. This is Thymidylate synthase from Baumannia cicadellinicola subsp. Homalodisca coagulata.